Here is a 149-residue protein sequence, read N- to C-terminus: Small ribosomal subunit protein uS19w (149 aa).

Belongs to the universal ribosomal protein uS19 family.

The protein localises to the cytoplasm. The polypeptide is Small ribosomal subunit protein uS19w (RPS15E) (Arabidopsis thaliana (Mouse-ear cress)).